A 637-amino-acid polypeptide reads, in one-letter code: MPIDPARLAFTDDGTPCSAAFGDVYHARGGGLEQARFVFIAGNGLPARWQGREHFAILETGFGFGLNFLATWDAWRADPKRCERLHFVSVERHPFTREDLATLHARWPELAPLAAELADHWPTLTPGMHRLHLNRGRVVLTLLFGDARELLPRLECGADAFFLDGFSPACNPELWSAALLAELGRLAASGATLATWSVSGDVRRALAAAGFDCEKAPGFDGKRQMCRGRHRDVGTGPAPAAAAARHALVIGAGLAGSSTAERLAARGWHVDVIDAADGPGEGASGNLTGVLRPLPSLDDNRLARITRAGALYGLHHLRQLTEAGLPVRWDACGVLHLARDPVHEDKQRRVVEAHRPPSDYLRFVERDEASTLAGWPLPVGGWWFPQGAWVSPPSLCAANLMTHPDLIRCHFGRAMQRLEASADGWTAFDADGKAIASAPVAVLANGVGIRAVPQAAALPVRSARGQVTHFPAAAGSPPNVVVCRLGYVAPALDGVRSAGATFSVDDDEPALRDADQRENLAKLEFILPGYAAAVDTAALAGRVGFRPASPDRLPMVGEVPAVLRADRATPLAQIPRHPGLYAVAGFGARGLVWASLAAELLASHIAGEPLPLERELVDALDPARYLLRPARGMTREG.

The interval 1–231 (MPIDPARLAF…KRQMCRGRHR (231 aa)) is tRNA (mnm(5)s(2)U34)-methyltransferase. An FAD-dependent cmnm(5)s(2)U34 oxidoreductase region spans residues 250-637 (IGAGLAGSST…RPARGMTREG (388 aa)).

It in the N-terminal section; belongs to the methyltransferase superfamily. tRNA (mnm(5)s(2)U34)-methyltransferase family. The protein in the C-terminal section; belongs to the DAO family. FAD serves as cofactor.

The protein localises to the cytoplasm. The catalysed reaction is 5-aminomethyl-2-thiouridine(34) in tRNA + S-adenosyl-L-methionine = 5-methylaminomethyl-2-thiouridine(34) in tRNA + S-adenosyl-L-homocysteine + H(+). Its function is as follows. Catalyzes the last two steps in the biosynthesis of 5-methylaminomethyl-2-thiouridine (mnm(5)s(2)U) at the wobble position (U34) in tRNA. Catalyzes the FAD-dependent demodification of cmnm(5)s(2)U34 to nm(5)s(2)U34, followed by the transfer of a methyl group from S-adenosyl-L-methionine to nm(5)s(2)U34, to form mnm(5)s(2)U34. The polypeptide is tRNA 5-methylaminomethyl-2-thiouridine biosynthesis bifunctional protein MnmC (Aromatoleum aromaticum (strain DSM 19018 / LMG 30748 / EbN1) (Azoarcus sp. (strain EbN1))).